A 130-amino-acid polypeptide reads, in one-letter code: Small ribosomal subunit protein uS8 (130 aa).

This sequence belongs to the universal ribosomal protein uS8 family. In terms of assembly, part of the 30S ribosomal subunit.

One of the primary rRNA binding proteins, it binds directly to 16S rRNA central domain where it helps coordinate assembly of the platform of the 30S subunit. The protein is Small ribosomal subunit protein uS8 of Thermococcus kodakarensis (strain ATCC BAA-918 / JCM 12380 / KOD1) (Pyrococcus kodakaraensis (strain KOD1)).